The sequence spans 223 residues: Putative protein phosphatase 2C 63 (223 aa).

The segment at methionine 1–glycine 22 is disordered. Residues methionine 1–valine 212 enclose the PPM-type phosphatase domain.

Belongs to the PP2C family.

The catalysed reaction is O-phospho-L-seryl-[protein] + H2O = L-seryl-[protein] + phosphate. The enzyme catalyses O-phospho-L-threonyl-[protein] + H2O = L-threonyl-[protein] + phosphate. This is Putative protein phosphatase 2C 63 from Oryza sativa subsp. japonica (Rice).